Here is a 337-residue protein sequence, read N- to C-terminus: Glyceraldehyde-3-phosphate dehydrogenase, cytosolic (337 aa).

Positions 1-151 (MAKVKVGING…YKSDLNIVSN (151 aa)) are binding to NAD. NAD(+) is bound by residues 13–14 (RI), aspartate 35, and arginine 82. The segment at 152–337 (ASCTTNCLAP…DLIMHISKCQ (186 aa)) is catalytic. D-glyceraldehyde 3-phosphate-binding positions include 153 to 155 (SCT), threonine 184, 213 to 214 (TG), and arginine 236. Cysteine 154 (nucleophile) is an active-site residue. NAD(+) is bound at residue asparagine 318.

Belongs to the glyceraldehyde-3-phosphate dehydrogenase family. In terms of assembly, homotetramer.

It localises to the cytoplasm. It carries out the reaction D-glyceraldehyde 3-phosphate + phosphate + NAD(+) = (2R)-3-phospho-glyceroyl phosphate + NADH + H(+). It functions in the pathway carbohydrate degradation; glycolysis; pyruvate from D-glyceraldehyde 3-phosphate: step 1/5. Functionally, key enzyme in glycolysis that catalyzes the first step of the pathway by converting D-glyceraldehyde 3-phosphate (G3P) into 3-phospho-D-glyceroyl phosphate. Essential for the maintenance of cellular ATP levels and carbohydrate metabolism. This Mesembryanthemum crystallinum (Common ice plant) protein is Glyceraldehyde-3-phosphate dehydrogenase, cytosolic (GAPC).